A 692-amino-acid chain; its full sequence is DNA ligase (692 aa).

Residues 35–39 (DLVYD), 88–89 (SL), and E117 each bind NAD(+). The active-site N6-AMP-lysine intermediate is the K119. Positions 140, 176, 301, and 325 each coordinate NAD(+). Zn(2+) is bound by residues C416, C419, C434, and C439. Residues 611–692 (LTNQSNSWAS…FDLIKNSKKT (82 aa)) form the BRCT domain.

The protein belongs to the NAD-dependent DNA ligase family. LigA subfamily. Mg(2+) is required as a cofactor. It depends on Mn(2+) as a cofactor.

The catalysed reaction is NAD(+) + (deoxyribonucleotide)n-3'-hydroxyl + 5'-phospho-(deoxyribonucleotide)m = (deoxyribonucleotide)n+m + AMP + beta-nicotinamide D-nucleotide.. DNA ligase that catalyzes the formation of phosphodiester linkages between 5'-phosphoryl and 3'-hydroxyl groups in double-stranded DNA using NAD as a coenzyme and as the energy source for the reaction. It is essential for DNA replication and repair of damaged DNA. This chain is DNA ligase, found in Mesomycoplasma hyopneumoniae (strain J / ATCC 25934 / NCTC 10110) (Mycoplasma hyopneumoniae).